Consider the following 269-residue polypeptide: Formamidopyrimidine-DNA glycosylase (269 aa).

The active-site Schiff-base intermediate with DNA is Pro2. Catalysis depends on Glu3, which acts as the Proton donor. The active-site Proton donor; for beta-elimination activity is the Lys57. His90, Arg109, and Arg150 together coordinate DNA. The segment at 235-269 (QVYGKAGEQCPNCAELIQELKIGQRNTFYCSSCQV) adopts an FPG-type zinc-finger fold. The Proton donor; for delta-elimination activity role is filled by Arg259.

The protein belongs to the FPG family. Monomer. Requires Zn(2+) as cofactor.

The catalysed reaction is Hydrolysis of DNA containing ring-opened 7-methylguanine residues, releasing 2,6-diamino-4-hydroxy-5-(N-methyl)formamidopyrimidine.. It carries out the reaction 2'-deoxyribonucleotide-(2'-deoxyribose 5'-phosphate)-2'-deoxyribonucleotide-DNA = a 3'-end 2'-deoxyribonucleotide-(2,3-dehydro-2,3-deoxyribose 5'-phosphate)-DNA + a 5'-end 5'-phospho-2'-deoxyribonucleoside-DNA + H(+). In terms of biological role, involved in base excision repair of DNA damaged by oxidation or by mutagenic agents. Acts as a DNA glycosylase that recognizes and removes damaged bases. Has a preference for oxidized purines, such as 7,8-dihydro-8-oxoguanine (8-oxoG). Has AP (apurinic/apyrimidinic) lyase activity and introduces nicks in the DNA strand. Cleaves the DNA backbone by beta-delta elimination to generate a single-strand break at the site of the removed base with both 3'- and 5'-phosphates. In Vibrio atlanticus (strain LGP32) (Vibrio splendidus (strain Mel32)), this protein is Formamidopyrimidine-DNA glycosylase.